The primary structure comprises 920 residues: Sensor histidine kinase SsrA (920 aa).

The Cytoplasmic portion of the chain corresponds to 1–19 (MNLLNLKNTLQTSLVIRLT). The helical transmembrane segment at 20–40 (FLFLLTTIIIWLLSVLTAAYI) threads the bilayer. Topologically, residues 41-291 (SMVQKRQHII…YGNLHNRILK (251 aa)) are periplasmic. The chain crosses the membrane as a helical span at residues 292-312 (IILQQIPFTLTALVLMTSAFC). Residues 313 to 920 (WLLHRSLAKP…RMIFKNYTIT (608 aa)) lie on the Cytoplasmic side of the membrane. Residues 317 to 369 (RSLAKPLWRFVDVINKTATAPLSTRLPAQRLDELDSIAGAFNQLLDTLQVQYD) enclose the HAMP domain. Residues 354–395 (AGAFNQLLDTLQVQYDNLENKVAERTQALNEAKKRAERANKR) adopt a coiled-coil conformation. The region spanning 402 to 614 (VISHELRTPM…CVSLVLPLQE (213 aa)) is the Histidine kinase domain. ATP is bound by residues His-405 and Asp-549. His-405 is modified (phosphohistidine; by autocatalysis). Residues 690–808 (QILLVDDADI…TLARYISIAA (119 aa)) enclose the Response regulatory domain. Asp-739 is subject to 4-aspartylphosphate.

In terms of processing, autophosphorylated.

Its subcellular location is the cell inner membrane. It carries out the reaction ATP + protein L-histidine = ADP + protein N-phospho-L-histidine.. In terms of biological role, member of the two-component regulatory system SsrA/SsrB (SpiR/SsrB) that is required for intracellular proliferation and systemic dissemination within the host. When inside acidic Salmonella-containing vesicles (SCV) within host cells the SsrA sensor kinase autophosphorylates and the phosphoryl group is transferred to the response regulator SsrB; phosphorylated SsrB activates the expression of genes encoding virulence proteins, including pathogenicity island 2 (SPI2) and other horizontally acquired genes, and antagonizes the action of transcriptional repressor hns (H-NS). The protein is Sensor histidine kinase SsrA of Salmonella typhimurium (strain LT2 / SGSC1412 / ATCC 700720).